The primary structure comprises 469 residues: 3-isopropylmalate dehydratase large subunit (469 aa).

[4Fe-4S] cluster contacts are provided by Cys349, Cys410, and Cys413.

Belongs to the aconitase/IPM isomerase family. LeuC type 1 subfamily. As to quaternary structure, heterodimer of LeuC and LeuD. Requires [4Fe-4S] cluster as cofactor.

The catalysed reaction is (2R,3S)-3-isopropylmalate = (2S)-2-isopropylmalate. The protein operates within amino-acid biosynthesis; L-leucine biosynthesis; L-leucine from 3-methyl-2-oxobutanoate: step 2/4. Catalyzes the isomerization between 2-isopropylmalate and 3-isopropylmalate, via the formation of 2-isopropylmaleate. This chain is 3-isopropylmalate dehydratase large subunit, found in Azoarcus sp. (strain BH72).